Reading from the N-terminus, the 136-residue chain is ATP synthase epsilon chain (136 aa).

It belongs to the ATPase epsilon chain family. F-type ATPases have 2 components, CF(1) - the catalytic core - and CF(0) - the membrane proton channel. CF(1) has five subunits: alpha(3), beta(3), gamma(1), delta(1), epsilon(1). CF(0) has three main subunits: a, b and c.

The protein resides in the cell membrane. In terms of biological role, produces ATP from ADP in the presence of a proton gradient across the membrane. The sequence is that of ATP synthase epsilon chain from Macrococcus caseolyticus (strain JCSC5402) (Macrococcoides caseolyticum).